A 710-amino-acid polypeptide reads, in one-letter code: Polyribonucleotide nucleotidyltransferase (710 aa).

Mg(2+) contacts are provided by Asp487 and Asp493. The 60-residue stretch at 554–613 folds into the KH domain; the sequence is PRIHTMKISAEKIKDVIGKGGAVIRALTEETGTTIEIEDDGTIKIAATEGAAAKEAIRRI. An S1 motif domain is found at 623–691; the sequence is GRIYTGKVAR…RQGRVRLSMK (69 aa). The segment at 691–710 is disordered; the sequence is KEAVEKPAEEANDASEAKGE.

This sequence belongs to the polyribonucleotide nucleotidyltransferase family. As to quaternary structure, component of the RNA degradosome, which is a multiprotein complex involved in RNA processing and mRNA degradation. It depends on Mg(2+) as a cofactor.

Its subcellular location is the cytoplasm. It catalyses the reaction RNA(n+1) + phosphate = RNA(n) + a ribonucleoside 5'-diphosphate. In terms of biological role, involved in mRNA degradation. Catalyzes the phosphorolysis of single-stranded polyribonucleotides processively in the 3'- to 5'-direction. In Vibrio campbellii (strain ATCC BAA-1116), this protein is Polyribonucleotide nucleotidyltransferase.